The chain runs to 274 residues: Elongation factor Ts (274 aa).

The segment at 79–82 (TDFV) is involved in Mg(2+) ion dislocation from EF-Tu.

It belongs to the EF-Ts family.

It is found in the cytoplasm. In terms of biological role, associates with the EF-Tu.GDP complex and induces the exchange of GDP to GTP. It remains bound to the aminoacyl-tRNA.EF-Tu.GTP complex up to the GTP hydrolysis stage on the ribosome. In Porphyromonas gingivalis (strain ATCC 33277 / DSM 20709 / CIP 103683 / JCM 12257 / NCTC 11834 / 2561), this protein is Elongation factor Ts.